The chain runs to 85 residues: MVVKIEVFTSPTCPYCPMAIEVVDEAKKEFGDKIDVEKIDIMVDREKAIDYGLMAVPAIAINGVVRFVGAPGREELFEAISDEIE.

Residues 2–85 (VVKIEVFTSP…LFEAISDEIE (84 aa)) enclose the Glutaredoxin domain. Cysteine 13 and cysteine 16 are joined by a disulfide.

This sequence belongs to the glutaredoxin family.

It is found in the cytoplasm. Does not function as a glutathione-disulfide oxidoreductase in the presence of glutathione and glutathione reductase. May be a component of a ribonucleotide-reducing system distinct from the previously described systems utilizing thioredoxin or glutaredoxin. In Methanothermobacter marburgensis (strain ATCC BAA-927 / DSM 2133 / JCM 14651 / NBRC 100331 / OCM 82 / Marburg) (Methanobacterium thermoautotrophicum), this protein is Probable Thioredoxin.